Reading from the N-terminus, the 279-residue chain is Large ribosomal subunit protein uL2 (279 aa).

2 disordered regions span residues 29–53 and 224–279; these read PEKS…TTRH and VAMN…KKRK. Over residues 253-268 the composition is skewed to basic and acidic residues; that stretch reads KEGRTRHPNKESDKLI. Positions 269–279 are enriched in basic residues; the sequence is VRRRNAGKKRK.

The protein belongs to the universal ribosomal protein uL2 family. Part of the 50S ribosomal subunit. Forms a bridge to the 30S subunit in the 70S ribosome.

Its function is as follows. One of the primary rRNA binding proteins. Required for association of the 30S and 50S subunits to form the 70S ribosome, for tRNA binding and peptide bond formation. It has been suggested to have peptidyltransferase activity; this is somewhat controversial. Makes several contacts with the 16S rRNA in the 70S ribosome. This chain is Large ribosomal subunit protein uL2, found in Leifsonia xyli subsp. xyli (strain CTCB07).